A 198-amino-acid chain; its full sequence is Cerebellin-4 (198 aa).

Positions 1–24 (MGSARRALSVVPAVLLILVLPVWA) are cleaved as a signal peptide. Asn26 and Asn85 each carry an N-linked (GlcNAc...) asparagine glycan. The 136-residue stretch at 63 to 198 (AANSKVAFSA…TFSGFLVFPL (136 aa)) folds into the C1q domain.

Homohexamer; disulfide-linked homotrimers. The trimers are assembled via the globular C1q domains. The trimers associate via N-terminal cysteine residues to form disulfide-linked hexamers. May form oligomers with CBLN1, CBLN2 and CBLN3 prior to secretion. Once secreted, does not interact with other CBLN family members. Strongly interacts with DCC in a NTN1-displaceable fashion. Weakly binds to NRXN1 and NRXN2 long and short isoforms produced by alternative promoter usage. Interaction with NRXN3 short isoform is hardly detectable; no interaction at all with NRXN3 long isoform. Does not interact with NEO1, GRID1 and GRID2. Sialoglycoprotein. Expressed in brain with high levels in particular thalamic nuclei. In the thalamus, predominantly expressed in neurons within the parafascicular nucleus. Found in the hippocampus, mostly in the dendrites and somata of pyramidal neurons (at protein level). Very low or no expression in most other brain regions. Highly expressed in the ventral medial habenula.

The protein resides in the secreted. It localises to the synapse. Acts as a synaptic organizer in specific subsets of neurons in the brain. Essential for the formation and maintenance of inhibitory GABAergic synapses. Promotes the development of dendrite-targeting inhibitory GABAergic synapses made by somatostatin-positive interneurons. May contribute to the function of ventral medial habenula region of the brain implicated in the regulation of anxiety-related behaviors. May play a role in CBLN3 export from the endoplasmic reticulum and secretion. The polypeptide is Cerebellin-4 (Cbln4) (Mus musculus (Mouse)).